The sequence spans 509 residues: Histone deacetylase 2 (509 aa).

A histone deacetylase region spans residues 24 to 338 (RRVCYFYDPE…WCYETGVALG (315 aa)). The active-site Proton donor/acceptor is the His158. Zn(2+) is bound by residues Asp193, His195, and Asp281. Residues 394-509 (PSVQFEERIP…NAKNEPGSSL (116 aa)) form a disordered region. 3 stretches are compositionally biased toward basic and acidic residues: residues 398-409 (FEERIPETKLPE), 418-434 (DERH…DHKP), and 448-472 (VKRE…HKVP). A compositionally biased stretch (polar residues) spans 481–494 (SSKQVPTADANSMA).

This sequence belongs to the histone deacetylase family. HD Type 1 subfamily. It depends on Zn(2+) as a cofactor. Expressed in roots.

Its subcellular location is the nucleus. The catalysed reaction is N(6)-acetyl-L-lysyl-[histone] + H2O = L-lysyl-[histone] + acetate. Its function is as follows. Responsible for the deacetylation of lysine residues on the N-terminal part of the core histones (H2A, H2B, H3 and H4). Histone deacetylation gives a tag for epigenetic repression and plays an important role in transcriptional regulation, cell cycle progression and developmental events. Histone deacetylases act via the formation of large multiprotein complexes. This Oryza sativa subsp. japonica (Rice) protein is Histone deacetylase 2.